Reading from the N-terminus, the 297-residue chain is tRNA dimethylallyltransferase (297 aa).

10 to 17 (GITASGKS) contacts ATP. 12–17 (TASGKS) serves as a coordination point for substrate. An interaction with substrate tRNA region spans residues 36–39 (DSKQ).

The protein belongs to the IPP transferase family. In terms of assembly, monomer. It depends on Mg(2+) as a cofactor.

It carries out the reaction adenosine(37) in tRNA + dimethylallyl diphosphate = N(6)-dimethylallyladenosine(37) in tRNA + diphosphate. Its function is as follows. Catalyzes the transfer of a dimethylallyl group onto the adenine at position 37 in tRNAs that read codons beginning with uridine, leading to the formation of N6-(dimethylallyl)adenosine (i(6)A). In Wolbachia pipientis subsp. Culex pipiens (strain wPip), this protein is tRNA dimethylallyltransferase.